The primary structure comprises 653 residues: 23S rRNA 5-hydroxycytidine C2501 synthase (653 aa).

It belongs to the peptidase U32 family. As to quaternary structure, interacts with precursors of the 50S ribosomal subunit.

With respect to regulation, iron-sulfur clusters and prephenate are required for ho5C2501 formation. Functionally, responsible for the formation of the 5-hydroxycytidine modification at the C2501 position (ho5C2501) of 23S rRNA. May be a Fe-S protein that catalyzes ho5C2501 formation using prephenate as a hydroxyl group donor. This chain is 23S rRNA 5-hydroxycytidine C2501 synthase, found in Escherichia coli (strain K12).